The sequence spans 338 residues: Tetraacyldisaccharide 4'-kinase (338 aa).

Position 53-60 (53-60 (TVGGSGKT)) interacts with ATP.

The protein belongs to the LpxK family.

It catalyses the reaction a lipid A disaccharide + ATP = a lipid IVA + ADP + H(+). The protein operates within glycolipid biosynthesis; lipid IV(A) biosynthesis; lipid IV(A) from (3R)-3-hydroxytetradecanoyl-[acyl-carrier-protein] and UDP-N-acetyl-alpha-D-glucosamine: step 6/6. Its function is as follows. Transfers the gamma-phosphate of ATP to the 4'-position of a tetraacyldisaccharide 1-phosphate intermediate (termed DS-1-P) to form tetraacyldisaccharide 1,4'-bis-phosphate (lipid IVA). This chain is Tetraacyldisaccharide 4'-kinase, found in Azorhizobium caulinodans (strain ATCC 43989 / DSM 5975 / JCM 20966 / LMG 6465 / NBRC 14845 / NCIMB 13405 / ORS 571).